The chain runs to 69 residues: Sec-independent protein translocase protein TatA (69 aa).

Residues 1-21 (MFGLGTMEMVIILVIVLVIFG) form a helical membrane-spanning segment. Residues 44–69 (NAEDDAPAEPEVSKPAAAESTEKKDA) form a disordered region.

This sequence belongs to the TatA/E family. In terms of assembly, the Tat system comprises two distinct complexes: a TatABC complex, containing multiple copies of TatA, TatB and TatC subunits, and a separate TatA complex, containing only TatA subunits. Substrates initially bind to the TatABC complex, which probably triggers association of the separate TatA complex to form the active translocon.

Its subcellular location is the cell inner membrane. In terms of biological role, part of the twin-arginine translocation (Tat) system that transports large folded proteins containing a characteristic twin-arginine motif in their signal peptide across membranes. TatA could form the protein-conducting channel of the Tat system. This chain is Sec-independent protein translocase protein TatA, found in Magnetococcus marinus (strain ATCC BAA-1437 / JCM 17883 / MC-1).